The following is a 508-amino-acid chain: Photosystem II CP47 reaction center protein (508 aa).

Transmembrane regions (helical) follow at residues S21–S36, I101–W115, G140–F156, I203–S218, V237–V252, and S457–R472.

It belongs to the PsbB/PsbC family. PsbB subfamily. In terms of assembly, PSII is composed of 1 copy each of membrane proteins PsbA, PsbB, PsbC, PsbD, PsbE, PsbF, PsbH, PsbI, PsbJ, PsbK, PsbL, PsbM, PsbT, PsbX, PsbY, PsbZ, Psb30/Ycf12, at least 3 peripheral proteins of the oxygen-evolving complex and a large number of cofactors. It forms dimeric complexes. Binds multiple chlorophylls. PSII binds additional chlorophylls, carotenoids and specific lipids. is required as a cofactor.

It localises to the plastid. Its subcellular location is the chloroplast thylakoid membrane. Its function is as follows. One of the components of the core complex of photosystem II (PSII). It binds chlorophyll and helps catalyze the primary light-induced photochemical processes of PSII. PSII is a light-driven water:plastoquinone oxidoreductase, using light energy to abstract electrons from H(2)O, generating O(2) and a proton gradient subsequently used for ATP formation. The sequence is that of Photosystem II CP47 reaction center protein from Ceratophyllum demersum (Rigid hornwort).